A 401-amino-acid chain; its full sequence is Argininosuccinate synthase (401 aa).

ATP is bound at residue 8–16 (AYSGGLDTS). Tyr-87 serves as a coordination point for L-citrulline. ATP is bound at residue Gly-117. L-aspartate-binding residues include Thr-119, Asn-123, and Asp-124. Position 123 (Asn-123) interacts with L-citrulline. L-citrulline-binding residues include Arg-127, Ser-175, Glu-259, and Tyr-271.

It belongs to the argininosuccinate synthase family. Type 1 subfamily. Homotetramer.

It localises to the cytoplasm. The catalysed reaction is L-citrulline + L-aspartate + ATP = 2-(N(omega)-L-arginino)succinate + AMP + diphosphate + H(+). It functions in the pathway amino-acid biosynthesis; L-arginine biosynthesis; L-arginine from L-ornithine and carbamoyl phosphate: step 2/3. The sequence is that of Argininosuccinate synthase from Arthrobacter sp. (strain FB24).